Here is a 483-residue protein sequence, read N- to C-terminus: Cytochrome P450 71A23 (483 aa).

The helical transmembrane segment at 1–21 threads the bilayer; the sequence is MILFLCLIILFIITILFFKKH. Cys-429 contributes to the heme binding site.

It belongs to the cytochrome P450 family. The cofactor is heme.

It is found in the membrane. The polypeptide is Cytochrome P450 71A23 (CYP71A23) (Arabidopsis thaliana (Mouse-ear cress)).